The primary structure comprises 286 residues: Elongation factor Ts (286 aa).

Positions 79–82 are involved in Mg(2+) ion dislocation from EF-Tu; the sequence is TDFV.

The protein belongs to the EF-Ts family.

Its subcellular location is the cytoplasm. Its function is as follows. Associates with the EF-Tu.GDP complex and induces the exchange of GDP to GTP. It remains bound to the aminoacyl-tRNA.EF-Tu.GTP complex up to the GTP hydrolysis stage on the ribosome. This Wolbachia sp. subsp. Drosophila simulans (strain wRi) protein is Elongation factor Ts.